We begin with the raw amino-acid sequence, 222 residues long: Probable transaldolase (222 aa).

Residue lysine 91 is the Schiff-base intermediate with substrate of the active site.

This sequence belongs to the transaldolase family. Type 3B subfamily.

It is found in the cytoplasm. It carries out the reaction D-sedoheptulose 7-phosphate + D-glyceraldehyde 3-phosphate = D-erythrose 4-phosphate + beta-D-fructose 6-phosphate. It functions in the pathway carbohydrate degradation; pentose phosphate pathway; D-glyceraldehyde 3-phosphate and beta-D-fructose 6-phosphate from D-ribose 5-phosphate and D-xylulose 5-phosphate (non-oxidative stage): step 2/3. Transaldolase is important for the balance of metabolites in the pentose-phosphate pathway. In Chlorobium chlorochromatii (strain CaD3), this protein is Probable transaldolase.